We begin with the raw amino-acid sequence, 44 residues long: Putative keratin-associated protein 20-4 (44 aa).

This sequence belongs to the KRTAP type 20 family. As to quaternary structure, interacts with hair keratins.

Functionally, in the hair cortex, hair keratin intermediate filaments are embedded in an interfilamentous matrix, consisting of hair keratin-associated proteins (KRTAP), which are essential for the formation of a rigid and resistant hair shaft through their extensive disulfide bond cross-linking with abundant cysteine residues of hair keratins. The matrix proteins include the high-sulfur and high-glycine-tyrosine keratins. This chain is Putative keratin-associated protein 20-4 (KRTAP20-4), found in Homo sapiens (Human).